The following is a 330-amino-acid chain: Aspartate--ammonia ligase (330 aa).

Belongs to the class-II aminoacyl-tRNA synthetase family. AsnA subfamily.

Its subcellular location is the cytoplasm. The enzyme catalyses L-aspartate + NH4(+) + ATP = L-asparagine + AMP + diphosphate + H(+). Its pathway is amino-acid biosynthesis; L-asparagine biosynthesis; L-asparagine from L-aspartate (ammonia route): step 1/1. The sequence is that of Aspartate--ammonia ligase from Streptococcus equi subsp. equi (strain 4047).